A 492-amino-acid polypeptide reads, in one-letter code: Dipeptide and tripeptide permease A (492 aa).

Topologically, residues 1–20 are cytoplasmic; it reads MSTANKHPEAASLNAFKQPR. Residues 21–43 form a helical membrane-spanning segment; sequence SFYLIFSIELWERFGYYGLQGIM. Topologically, residues 44 to 58 are periplasmic; sequence AVYLVKMLGMSEAQS. Residues 59 to 79 traverse the membrane as a helical segment; sequence ITLFASFSALVYGLIAVGGWL. Topologically, residues 80–88 are cytoplasmic; sequence GDKVLGTKR. A helical transmembrane segment spans residues 89–109; sequence VIVLGTLVLALGYALVAWSGH. Asp-110 is a topological domain (periplasmic). A helical transmembrane segment spans residues 111-131; it reads IAMIYFGMATIAVGNGLFKAN. The Cytoplasmic portion of the chain corresponds to 132-152; sequence PSSLLSTCYEKDDPRLDGAFT. The helical transmembrane segment at 153–173 threads the bilayer; that stretch reads MYYMAINIGSFFSMLATPWLA. Residues 174 to 178 are Periplasmic-facing; it reads AQFGW. The chain crosses the membrane as a helical span at residues 179-199; it reads STAFGLSFVGMLITLVNFMFF. The Cytoplasmic portion of the chain corresponds to 200–217; sequence RKWVKDHGSKPDFAPLNM. A helical membrane pass occupies residues 218–238; it reads GKLLVTLLGIAVMIAAATWLL. At 239–245 the chain is on the periplasmic side; sequence HNQDIAR. A helical membrane pass occupies residues 246–266; sequence MVLGAVAVAIVVIFTKEALTL. Over 267 to 273 the chain is Cytoplasmic; that stretch reads KGAARRK. The helical transmembrane segment at 274-294 threads the bilayer; the sequence is MIVAFLLMLEAIVFFVLYMQM. The Periplasmic segment spans residues 295–319; sequence PTSLNFFAIRNVEHSLLGIAFQPEQ. Residues 320 to 340 form a helical membrane-spanning segment; sequence FQALNPFWIMIFSPLLAALYN. Over 341–351 the chain is Cytoplasmic; sequence KLGDRMPMPHK. A helical transmembrane segment spans residues 352 to 372; the sequence is FALGMVLCSAAFLVLPLGASL. The Periplasmic portion of the chain corresponds to 373–377; that stretch reads ANKMG. Residues 378–398 traverse the membrane as a helical segment; the sequence is IVSVGWLVLSYALQSVGELMI. The Cytoplasmic segment spans residues 399–413; sequence SGLGLAMVAQLVPQR. The helical transmembrane segment at 414–434 threads the bilayer; the sequence is LMGFIMGSWFLTTAGAAMVAG. Over 435–458 the chain is Periplasmic; it reads KVANLMAVPENITNPLLSLHVYGD. The chain crosses the membrane as a helical span at residues 459–479; sequence IFFKIGITTGVIAVLMILAAP. Residues 480–492 lie on the Cytoplasmic side of the membrane; it reads LLNRMTQDEQPGV.

This sequence belongs to the major facilitator superfamily. Proton-dependent oligopeptide transporter (POT/PTR) (TC 2.A.17) family. DtpA subfamily.

Its subcellular location is the cell inner membrane. Its function is as follows. Proton-dependent permease that transports di- and tripeptides. This chain is Dipeptide and tripeptide permease A, found in Erwinia pyrifoliae (strain DSM 12163 / CIP 106111 / Ep16/96).